Here is a 360-residue protein sequence, read N- to C-terminus: Phospho-N-acetylmuramoyl-pentapeptide-transferase (360 aa).

10 helical membrane passes run 21–41 (YITV…LWIG), 73–93 (TMGG…WANL), 94–114 (ANPY…IGFV), 132–152 (WKYF…YWLG), 168–188 (IMPQ…VGTG), 199–219 (GLAI…AWAT), 239–259 (VVVF…FNTY), 263–283 (VFMG…VAIL), 288–308 (FLLV…ILQV), and 338–358 (VIIR…VTLK).

Belongs to the glycosyltransferase 4 family. MraY subfamily. Mg(2+) is required as a cofactor.

It is found in the cell inner membrane. It carries out the reaction UDP-N-acetyl-alpha-D-muramoyl-L-alanyl-gamma-D-glutamyl-meso-2,6-diaminopimeloyl-D-alanyl-D-alanine + di-trans,octa-cis-undecaprenyl phosphate = di-trans,octa-cis-undecaprenyl diphospho-N-acetyl-alpha-D-muramoyl-L-alanyl-D-glutamyl-meso-2,6-diaminopimeloyl-D-alanyl-D-alanine + UMP. Its pathway is cell wall biogenesis; peptidoglycan biosynthesis. Catalyzes the initial step of the lipid cycle reactions in the biosynthesis of the cell wall peptidoglycan: transfers peptidoglycan precursor phospho-MurNAc-pentapeptide from UDP-MurNAc-pentapeptide onto the lipid carrier undecaprenyl phosphate, yielding undecaprenyl-pyrophosphoryl-MurNAc-pentapeptide, known as lipid I. This Haemophilus influenzae (strain PittEE) protein is Phospho-N-acetylmuramoyl-pentapeptide-transferase.